Here is a 1002-residue protein sequence, read N- to C-terminus: MLMKQTFLYFLLTCVVSAQFNGYVPPEQNGGDIVVPKDFYEKFGEDFIREQEESSAPLMNPVPERDEAEAPHHPKGHHEFNDDFEDDTALEHPGFKDKLDSFLQPARDFLHTVSDRLDNIFDDDEDEHVREKRPHDSADEDAPRRKHGKCKGKGKHHKGKHAKGKGKKSHPKPEDDSVFFDDERPKHHEFDDEDREFPAHHEPGEHMPPPPMHHKPGEHMPPPPMHHEPGEHMPPPPMHHEPGEHMPPPPMHHEPGEHMPPPPMHHEPGEHMPPPPMHHEPGEHMPPPPMHHEPGEHMPPPPMHHEPGEHMPPPPMHHEPGEHMPPPPMHHEPGEHMPPPPFKHHELEEHEGPEHHRGPEDKEHHKGPKDKEHHKGPKDKEHHKGPKDKEHHKGPKDKEHHKGPKDKEHHKGPKDKEHHQGPKEKHNERPEQNMQSSHELLVIEAFADLINSVPVEEIAEEFSRFLDTLGIEYYGNIPVHIQENAPKDSSIPPLFEFDDDLELSDLTPEQFAYLEMLKAEGIDPMTAFRDQSHPAKPSNAQPADSSRPYAVFSQEENGEHVNLKAFPDHTLRVKDSKPESLGIDTVKQYTGYLDVEDDRHLFFWFFESRNDPENDPVVLWLNGGPGCSSLTGLFMELGPSSINIETLKPEYNPHSWNSNASVIFLDQPINTGFSNGDDSVLDTVTAGKDVYAFLNLFFAKFPQYAHLDFHIAGESYAGHYIPQFAKEIMEHNQGANFFVASGYEMEKQYINLKSVLIGNGLTDPLVQYYFYGKMACESPYGPIMSQEECDRITGAYDTCAKLITGCYQTGFTPVCIGASLYCNNAMIGPFTKTGLNIYDIREECRDQEHLCYPETGAIESYLNQEFVQEALGVEYDYKGCNTEVNIGFLFKGDWMRKTFRDDVTAILEAGLPVLIYAGDADYICNYMGNEAWTDALEWAGQREFYEAELKPWSPNGKEAGRGKSFKNFGYLRLYEAGHMVPFNQPEASLEMLNSWIDGSLFA.

The N-terminal stretch at 1–18 (MLMKQTFLYFLLTCVVSA) is a signal peptide. Positions 19 to 521 (QFNGYVPPEQ…AYLEMLKAEG (503 aa)) are excised as a propeptide. Disordered stretches follow at residues 51–91 (QEES…TALE), 124–436 (DEDE…NMQS), and 527–546 (AFRDQSHPAKPSNAQPADSS). 2 stretches are compositionally biased toward basic and acidic residues: residues 63–81 (PERDEAEAPHHPKGHHEFN) and 127–143 (EHVREKRPHDSADEDAP). Residues 144–170 (RRKHGKCKGKGKHHKGKHAKGKGKKSH) show a composition bias toward basic residues. The span at 171 to 205 (PKPEDDSVFFDDERPKHHEFDDEDREFPAHHEPGE) shows a compositional bias: basic and acidic residues. 15 tandem repeats follow at residues 225 to 237 (MHHEPGEHMPPPP), 238 to 250 (MHHEPGEHMPPPP), 251 to 263 (MHHEPGEHMPPPP), 264 to 276 (MHHEPGEHMPPPP), 277 to 289 (MHHEPGEHMPPPP), 290 to 302 (MHHEPGEHMPPPP), 303 to 315 (MHHEPGEHMPPPP), 316 to 328 (MHHEPGEHMPPPP), 329 to 341 (MHHEPGEHMPPPP), 361 to 369 (DKEHHKGPK), 370 to 378 (DKEHHKGPK), 379 to 387 (DKEHHKGPK), 388 to 396 (DKEHHKGPK), 397 to 405 (DKEHHKGPK), and 406 to 414 (DKEHHKGPK). Residues 225–341 (MHHEPGEHMP…EPGEHMPPPP (117 aa)) are 9 X 13 AA tandem repeats of M-H-H-E-P-G-E-H-M-P-P-P-P. Residues 343 to 431 (KHHELEEHEG…PKEKHNERPE (89 aa)) show a composition bias toward basic and acidic residues. The tract at residues 361 to 423 (DKEHHKGPKD…KDKEHHQGPK (63 aa)) is 7 X 9 AA tandem repeats of D-K-E-H-H-K-G-P-K. The stretch at 415–423 (DKEHHQGPK) is one 2-7; approximate repeat. 5 disulfide bridges follow: Cys627/Cys880, Cys776/Cys789, Cys799/Cys822, Cys806/Cys815, and Cys844/Cys851. Residue Asn659 is glycosylated (N-linked (GlcNAc...) asparagine). Residue Ser715 is part of the active site. Asp921 is an active-site residue. A substrate-binding site is contributed by Cys924. The active site involves His978. Met979 lines the substrate pocket.

Belongs to the peptidase S10 family. Heterodimer of two subunits of 32 kDa and 19 kDa derived from the precursor protein and linked by a disulfide bond.

It localises to the vacuole. It carries out the reaction Release of a C-terminal amino acid with broad specificity.. In terms of biological role, involved in degradation of small peptides. Digests preferentially peptides containing an aliphatic or hydrophobic residue in P1' position, as well as methionine, leucine or phenylalanine in P1 position of ester substrate. The protein is Carboxypeptidase Y (cpy1) of Schizosaccharomyces pombe (strain 972 / ATCC 24843) (Fission yeast).